The primary structure comprises 490 residues: GTPase Der (490 aa).

EngA-type G domains are found at residues 3–166 (PVIA…PRDD) and 196–369 (IKIA…KSAV). GTP-binding positions include 9 to 16 (GRPNVGKS), 56 to 60 (DTGGI), and 118 to 121 (NKVD). The interval 162 to 189 (FPRDDDEPAEGEEEEVVAEGEEAKRIPG) is disordered. The segment covering 164 to 181 (RDDDEPAEGEEEEVVAEG) has biased composition (acidic residues). GTP-binding positions include 202-209 (GRPNVGKS), 249-253 (DTAGV), and 314-317 (NKWD). The KH-like domain maps to 370–454 (TRWPTSRLTQ…PIRIEFKGGE (85 aa)). The tract at residues 453 to 490 (GENPYEGNKNTLTDRQVNKKRRLMSHNKKASKKRRDKK) is disordered. Over residues 470 to 490 (NKKRRLMSHNKKASKKRRDKK) the composition is skewed to basic residues.

Belongs to the TRAFAC class TrmE-Era-EngA-EngB-Septin-like GTPase superfamily. EngA (Der) GTPase family. As to quaternary structure, associates with the 50S ribosomal subunit.

Functionally, GTPase that plays an essential role in the late steps of ribosome biogenesis. This Pseudomonas fluorescens (strain Pf0-1) protein is GTPase Der.